We begin with the raw amino-acid sequence, 112 residues long: Integration host factor subunit alpha (112 aa).

The protein belongs to the bacterial histone-like protein family. Heterodimer of an alpha and a beta chain.

Functionally, this protein is one of the two subunits of integration host factor, a specific DNA-binding protein that functions in genetic recombination as well as in transcriptional and translational control. This is Integration host factor subunit alpha from Rhizobium johnstonii (strain DSM 114642 / LMG 32736 / 3841) (Rhizobium leguminosarum bv. viciae).